Reading from the N-terminus, the 162-residue chain is NADH-quinone oxidoreductase subunit I 2 (162 aa).

2 4Fe-4S ferredoxin-type domains span residues 52-82 and 93-122; these read LRRY…IEAG and VRYD…EGPN. The [4Fe-4S] cluster site is built by C62, C65, C68, C72, C102, C105, C108, and C112.

It belongs to the complex I 23 kDa subunit family. NDH-1 is composed of 14 different subunits. Subunits NuoA, H, J, K, L, M, N constitute the membrane sector of the complex. [4Fe-4S] cluster is required as a cofactor.

It localises to the cell inner membrane. The enzyme catalyses a quinone + NADH + 5 H(+)(in) = a quinol + NAD(+) + 4 H(+)(out). Its function is as follows. NDH-1 shuttles electrons from NADH, via FMN and iron-sulfur (Fe-S) centers, to quinones in the respiratory chain. The immediate electron acceptor for the enzyme in this species is believed to be ubiquinone. Couples the redox reaction to proton translocation (for every two electrons transferred, four hydrogen ions are translocated across the cytoplasmic membrane), and thus conserves the redox energy in a proton gradient. This is NADH-quinone oxidoreductase subunit I 2 from Rhodopseudomonas palustris (strain HaA2).